A 180-amino-acid polypeptide reads, in one-letter code: Inner membrane-spanning protein YciB (180 aa).

Transmembrane regions (helical) follow at residues 25-45 (QNAT…CYFV), 54-74 (IISV…GNSI), 76-96 (IKIK…MSGI), 118-138 (ITLS…NEIV), and 150-170 (FKVF…LPLL).

Belongs to the YciB family.

The protein localises to the cell inner membrane. Plays a role in cell envelope biogenesis, maintenance of cell envelope integrity and membrane homeostasis. The protein is Inner membrane-spanning protein YciB of Rickettsia canadensis (strain McKiel).